The following is a 686-amino-acid chain: Chondroitin proteoglycan 1 (686 aa).

The N-terminal stretch at M1–A18 is a signal peptide. N-linked (GlcNAc...) asparagine glycosylation is present at N46. The region spanning D63–G120 is the Chitin-binding type-2 1 domain. C96 and C109 are disulfide-bonded. Residue N143 is glycosylated (N-linked (GlcNAc...) asparagine). The Chitin-binding type-2 2 domain maps to D228–N285. C261 and C274 are disulfide-bonded. Residues Q284 to G312 form a disordered region. 3 N-linked (GlcNAc...) asparagine glycosylation sites follow: N285, N635, and N664. The segment at K658–H686 is disordered.

Functionally, required for polar body extrusion during cytokinesis in embryo development. Affects cortical granule size. Shown to have roles in meiotic chromosome segregation, osmotic barrier function and polarization in conjunction with cpg-2. Binds chitin. This chain is Chondroitin proteoglycan 1 (cpg-1), found in Caenorhabditis briggsae.